We begin with the raw amino-acid sequence, 315 residues long: Iron(3+)-hydroxamate-binding protein FhuD (315 aa).

The signal sequence occupies residues 1-23 (MTHIYKKLGAAFFALLLIAALAA). Cys-24 carries N-palmitoyl cysteine lipidation. Cys-24 is lipidated: S-diacylglycerol cysteine. Residues 60 to 315 (RVVVMADGYY…LEFITESLTK (256 aa)) enclose the Fe/B12 periplasmic-binding domain.

The protein belongs to the bacterial solute-binding protein 8 family. The complex is composed of an ATP-binding protein (FhuC), two transmembrane proteins (FhuB and FhuG) and a solute-binding protein (FhuD or YxeB).

The protein resides in the cell membrane. It is found in the membrane raft. Part of the ABC transporter complex FhuCBGD involved in iron(3+)-hydroxamate import. Binds the iron(3+)-hydroxamate complex and transfers it to the membrane-bound permease. Required for the transport of ferrichrome and coprogen. The chain is Iron(3+)-hydroxamate-binding protein FhuD (fhuD) from Bacillus subtilis (strain 168).